Consider the following 354-residue polypeptide: Protein-arginine kinase (354 aa).

The 231-residue stretch at 24-254 (IVLSSRIRLA…QQIIQQEKMA (231 aa)) folds into the Phosphagen kinase C-terminal domain. ATP contacts are provided by residues 27–31 (SSRIR), His92, Arg125, 176–180 (RASVM), and 207–212 (RGIYGE). An RDXXRA motif of the pArg binding pocket involved in allosteric regulation motif is present at residues 337–342 (RDYRRA).

This sequence belongs to the ATP:guanido phosphotransferase family.

It carries out the reaction L-arginyl-[protein] + ATP = N(omega)-phospho-L-arginyl-[protein] + ADP + H(+). Its activity is regulated as follows. Appears to be allosterically activated by the binding of pArg-containing polypeptides to the pArg-binding pocket localized in the C-terminal domain of McsB. Catalyzes the specific phosphorylation of arginine residues in a large number of proteins. Is part of the bacterial stress response system. Protein arginine phosphorylation has a physiologically important role and is involved in the regulation of many critical cellular processes, such as protein homeostasis, motility, competence, and stringent and stress responses, by regulating gene expression and protein activity. In Bacillus thuringiensis subsp. konkukian (strain 97-27), this protein is Protein-arginine kinase.